A 361-amino-acid chain; its full sequence is G2/mitotic-specific cyclin-B1 (361 aa).

Positions 1 to 13 are enriched in polar residues; sequence MLRATNNRRTSNN. Residues 1–33 are disordered; sequence MLRATNNRRTSNNVEKDSLQMAKHGNGPLKPVN.

It belongs to the cyclin family. Cyclin AB subfamily. In terms of assembly, interacts with the CDK1 protein kinase to form a serine/threonine kinase holoenzyme complex also known as maturation promoting factor (MPF). The cyclin subunit imparts substrate specificity to the complex. Interacts with E3 ubiquitin-protein ligase etc-1. In terms of processing, ubiquitinated by etc-1 likely during meiosis, resulting in its degradation.

It localises to the cytoplasm. Its function is as follows. Essential for the control of the cell cycle at the G2/M (mitosis) transition. This is G2/mitotic-specific cyclin-B1 (cyb-1) from Caenorhabditis elegans.